The primary structure comprises 124 residues: Large ribosomal subunit protein uL29 (124 aa).

It belongs to the universal ribosomal protein uL29 family.

The protein is Large ribosomal subunit protein uL29 (RPL35) of Tetrahymena thermophila (strain SB210).